The sequence spans 219 residues: Small ribosomal subunit protein eS1 (219 aa).

It belongs to the eukaryotic ribosomal protein eS1 family. Component of the small ribosomal subunit. Mature ribosomes consist of a small (40S) and a large (60S) subunit. The 40S subunit contains about 33 different proteins and 1 molecule of RNA (18S). The 60S subunit contains about 49 different proteins and 3 molecules of RNA (25S, 5.8S and 5S).

It is found in the cytoplasm. The polypeptide is Small ribosomal subunit protein eS1 (Guillardia theta (Cryptophyte)).